The following is a 392-amino-acid chain: Formate-dependent phosphoribosylglycinamide formyltransferase (392 aa).

N(1)-(5-phospho-beta-D-ribosyl)glycinamide contacts are provided by residues 22-23 (EL) and Glu-82. Residues Arg-114, Lys-155, 160 to 165 (SSGKGQ), 195 to 198 (EGVV), and Glu-203 contribute to the ATP site. The region spanning 119 to 308 (RLAAEELQLP…EFALHVRAFL (190 aa)) is the ATP-grasp domain. Residues Glu-267 and Glu-279 each coordinate Mg(2+). N(1)-(5-phospho-beta-D-ribosyl)glycinamide contacts are provided by residues Asp-286, Lys-355, and 362–363 (RR).

Belongs to the PurK/PurT family. In terms of assembly, homodimer.

The enzyme catalyses N(1)-(5-phospho-beta-D-ribosyl)glycinamide + formate + ATP = N(2)-formyl-N(1)-(5-phospho-beta-D-ribosyl)glycinamide + ADP + phosphate + H(+). It participates in purine metabolism; IMP biosynthesis via de novo pathway; N(2)-formyl-N(1)-(5-phospho-D-ribosyl)glycinamide from N(1)-(5-phospho-D-ribosyl)glycinamide (formate route): step 1/1. Functionally, involved in the de novo purine biosynthesis. Catalyzes the transfer of formate to 5-phospho-ribosyl-glycinamide (GAR), producing 5-phospho-ribosyl-N-formylglycinamide (FGAR). Formate is provided by PurU via hydrolysis of 10-formyl-tetrahydrofolate. This Escherichia coli O157:H7 protein is Formate-dependent phosphoribosylglycinamide formyltransferase.